Here is a 514-residue protein sequence, read N- to C-terminus: Transcription termination factor Rho (514 aa).

Residues 25-52 (EPSSTPGPARNARRSNRRMRHPDKDVDK) form a disordered region. The span at 35–45 (NARRSNRRMRH) shows a compositional bias: basic residues. The region spanning 141-216 (LMYGEGTLEI…LRIEAINHAD (76 aa)) is the Rho RNA-BD domain. Residues 259–264 (GFGQRG), 271–276 (RAGKTM), and arginine 302 contribute to the ATP site.

This sequence belongs to the Rho family. In terms of assembly, homohexamer. The homohexamer assembles into an open ring structure.

In terms of biological role, facilitates transcription termination by a mechanism that involves Rho binding to the nascent RNA, activation of Rho's RNA-dependent ATPase activity, and release of the mRNA from the DNA template. The protein is Transcription termination factor Rho of Rhodopirellula baltica (strain DSM 10527 / NCIMB 13988 / SH1).